The sequence spans 284 residues: L-ribulose-5-phosphate 3-epimerase UlaE (284 aa).

This sequence belongs to the L-ribulose-5-phosphate 3-epimerase family.

The catalysed reaction is L-ribulose 5-phosphate = L-xylulose 5-phosphate. Its pathway is cofactor degradation; L-ascorbate degradation; D-xylulose 5-phosphate from L-ascorbate: step 3/4. Functionally, catalyzes the isomerization of L-xylulose-5-phosphate to L-ribulose-5-phosphate. Is involved in the anaerobic L-ascorbate utilization. The sequence is that of L-ribulose-5-phosphate 3-epimerase UlaE from Salmonella dublin (strain CT_02021853).